The chain runs to 120 residues: HTH-type transcriptional regulator NmtR (120 aa).

The region spanning 15–109 (LDSQAAAQVA…EAIYHSEHLH (95 aa)) is the HTH arsR-type domain. The segment at residues 49 to 72 (VTDLAEAIGMEQSAVSHQLRVLRN) is a DNA-binding region (H-T-H motif). Ni(2+) is bound by residues Asp-91, His-93, His-104, and His-107.

In terms of assembly, homodimer.

With respect to regulation, binding to DNA is inhibited by nickel and, to some extent, cobalt ions. Represses transcription of ctpJ/nmtA, by binding to its promoter region. The sequence is that of HTH-type transcriptional regulator NmtR (nmtR) from Mycobacterium tuberculosis (strain ATCC 25618 / H37Rv).